The primary structure comprises 208 residues: Uracil phosphoribosyltransferase (208 aa).

Residues arginine 78, arginine 103, and 130–138 (DPMFATGGT) each bind 5-phospho-alpha-D-ribose 1-diphosphate. Uracil contacts are provided by residues isoleucine 193 and 198 to 200 (GDA). Residue aspartate 199 participates in 5-phospho-alpha-D-ribose 1-diphosphate binding.

This sequence belongs to the UPRTase family. The cofactor is Mg(2+).

The catalysed reaction is UMP + diphosphate = 5-phospho-alpha-D-ribose 1-diphosphate + uracil. It functions in the pathway pyrimidine metabolism; UMP biosynthesis via salvage pathway; UMP from uracil: step 1/1. Its activity is regulated as follows. Allosterically activated by GTP. Catalyzes the conversion of uracil and 5-phospho-alpha-D-ribose 1-diphosphate (PRPP) to UMP and diphosphate. The sequence is that of Uracil phosphoribosyltransferase from Campylobacter jejuni subsp. jejuni serotype O:2 (strain ATCC 700819 / NCTC 11168).